We begin with the raw amino-acid sequence, 147 residues long: Protein MioC (147 aa).

The region spanning Ile4–Val143 is the Flavodoxin-like domain.

It belongs to the flavodoxin family. MioC subfamily. Homodimer. It depends on FMN as a cofactor.

Probable electron transporter required for biotin synthase activity. This Escherichia coli (strain K12) protein is Protein MioC (mioC).